Reading from the N-terminus, the 247-residue chain is Orotidine 5'-phosphate decarboxylase (247 aa).

Residues aspartate 22, lysine 44, 71 to 80 (DLKFHDIPNT), threonine 131, arginine 192, glutamine 201, glycine 221, and arginine 222 contribute to the substrate site. Catalysis depends on lysine 73, which acts as the Proton donor.

This sequence belongs to the OMP decarboxylase family. Type 1 subfamily. As to quaternary structure, homodimer.

The catalysed reaction is orotidine 5'-phosphate + H(+) = UMP + CO2. Its pathway is pyrimidine metabolism; UMP biosynthesis via de novo pathway; UMP from orotate: step 2/2. Catalyzes the decarboxylation of orotidine 5'-monophosphate (OMP) to uridine 5'-monophosphate (UMP). In Pectobacterium carotovorum subsp. carotovorum (strain PC1), this protein is Orotidine 5'-phosphate decarboxylase.